The chain runs to 358 residues: Diels-Alderase phmD (358 aa).

This sequence belongs to the Diels-Alderase family.

It participates in mycotoxin biosynthesis. In terms of biological role, diels-Alderase; part of the gene cluster that mediates the biosynthesis of the mycotoxins phomacins, leucine-derived cytochalasans with potent actin polymerization-inhibitory activities and monocot-specific antigerminative activities. The first step in the pathway is catalyzed by the hybrid PKS-NRPS phmA, assisted by the enoyl reductase phmE, that are responsible for fusion of the leucine precursor and the polyketide backbone to produce a 2-pyrrolidone intermediate. The polyketide synthase module (PKS) of phmA is responsible for the synthesis of the polyketide backbone and the downstream nonribosomal peptide synthetase (NRPS) amidates the carboxyl end of the polyketide with the leucine precursor. Because phmA lacks a designated enoylreductase (ER) domain, the required activity is provided the enoyl reductase phmE. Reduction by the hydrolyase phmG, followed by dehydration and intra-molecular Diels-Alder cyclization by the Diels-Alderase phmD then yield the required isoindolone-fused macrocycle. A number of oxidative steps catalyzed by the tailoring cytochrome P450 monooxygenase phmB, the FAD-linked oxidoreductase phmC and the short-chain dehydrogenase/reductase phmF, are further required to afford the final products, phomacin D and phomacin E. The sequence is that of Diels-Alderase phmD from Phaeosphaeria nodorum (strain SN15 / ATCC MYA-4574 / FGSC 10173) (Glume blotch fungus).